The primary structure comprises 763 residues: Hormone-sensitive lipase (763 aa).

The Involved in the stabilization of the negatively charged intermediate by the formation of the oxyanion hole motif lies at 350-352; the sequence is HGG. Residue serine 424 is part of the active site. Residue serine 552 is modified to Phosphoserine. Serine 554 carries the post-translational modification Phosphoserine; by AMPK. Serine 595, serine 627, and serine 649 each carry phosphoserine. Over residues 616–627 the composition is skewed to basic and acidic residues; that stretch reads AREEAEAKEGLS. Positions 616–652 are disordered; the sequence is AREEAEAKEGLSAKDGSSRVSNAFPEGFHPRRTSQGA. Residues aspartate 692 and histidine 722 contribute to the active site.

This sequence belongs to the 'GDXG' lipolytic enzyme family. In terms of assembly, monomer and homodimer. Interacts with CAVIN1 in the adipocyte cytoplasm. Interacts with PLIN5. Post-translationally, phosphorylation by AMPK reduces its translocation towards the lipid droplets.

It is found in the cell membrane. Its subcellular location is the membrane. It localises to the caveola. The protein resides in the cytoplasm. The protein localises to the cytosol. It is found in the lipid droplet. The enzyme catalyses a diacylglycerol + H2O = a monoacylglycerol + a fatty acid + H(+). It catalyses the reaction a triacylglycerol + H2O = a diacylglycerol + a fatty acid + H(+). It carries out the reaction a monoacylglycerol + H2O = glycerol + a fatty acid + H(+). The catalysed reaction is Hydrolyzes glycerol monoesters of long-chain fatty acids.. The enzyme catalyses 1,2-di-(9Z-octadecenoyl)-glycerol + (9Z)-octadecenoate + H(+) = 1,2,3-tri-(9Z-octadecenoyl)-glycerol + H2O. It catalyses the reaction 2,3-di-(9Z)-octadecenoyl-sn-glycerol + H2O = 2-(9Z-octadecenoyl)-glycerol + (9Z)-octadecenoate + H(+). It carries out the reaction cholesteryl (9Z-octadecenoate) + H2O = cholesterol + (9Z)-octadecenoate + H(+). The catalysed reaction is 1,2,3-tri-(9Z-octadecenoyl)-glycerol + H2O = di-(9Z)-octadecenoylglycerol + (9Z)-octadecenoate + H(+). The enzyme catalyses all-trans-retinyl hexadecanoate + H2O = all-trans-retinol + hexadecanoate + H(+). It catalyses the reaction 1,2-di-(9Z-octadecenoyl)-glycerol + H2O = (9Z-octadecenoyl)-glycerol + (9Z)-octadecenoate + H(+). It carries out the reaction 2-(5Z,8Z,11Z,14Z-eicosatetraenoyl)-glycerol + H2O = glycerol + (5Z,8Z,11Z,14Z)-eicosatetraenoate + H(+). The catalysed reaction is 1-(9Z-octadecenoyl)-glycerol + H2O = glycerol + (9Z)-octadecenoate + H(+). The enzyme catalyses 2-(9Z-octadecenoyl)-glycerol + H2O = glycerol + (9Z)-octadecenoate + H(+). It catalyses the reaction 1-O-hexadecyl-2-acetyl-sn-glycerol + H2O = 1-O-hexadecyl-sn-glycerol + acetate + H(+). It carries out the reaction 1,2-di-(9Z-octadecenoyl)-sn-glycerol + H2O = (9Z-octadecenoyl)-glycerol + (9Z)-octadecenoate + H(+). The catalysed reaction is 1,3-di-(9Z-octadecenoyl)-glycerol + H2O = 1-(9Z-octadecenoyl)-glycerol + (9Z)-octadecenoate + H(+). The enzyme catalyses 1,2-di-(9Z-octadecenoyl)-glycerol + H2O = 2-(9Z-octadecenoyl)-glycerol + (9Z)-octadecenoate + H(+). It functions in the pathway glycerolipid metabolism; triacylglycerol degradation. Lipase with broad substrate specificity, catalyzing the hydrolysis of triacylglycerols (TAGs), diacylglycerols (DAGs), monoacylglycerols (MAGs), cholesteryl esters and retinyl esters. Shows a preferential hydrolysis of DAGs over TAGs and MAGs. Preferentially hydrolyzes fatty acid (FA) esters at the sn-3 position of the glycerol backbone in DAGs and FA esters at the sn-1 and sn-2 positions of the glycerol backbone in TAGs. Catalyzes the hydrolysis of 2-arachidonoylglycerol, an endocannabinoid and of 2-acetyl monoalkylglycerol ether, the penultimate precursor of the pathway for de novo synthesis of platelet-activating factor. In adipose tissue and heart, it primarily hydrolyzes stored triglycerides to free fatty acids, while in steroidogenic tissues, it principally converts cholesteryl esters to free cholesterol for steroid hormone production. The sequence is that of Hormone-sensitive lipase (LIPE) from Ictidomys tridecemlineatus (Thirteen-lined ground squirrel).